We begin with the raw amino-acid sequence, 373 residues long: Eukaryotic translation initiation factor 3 subunit M (373 aa).

The residue at position 2 (Ser-2) is an N-acetylserine. Phosphoserine is present on residues Ser-2 and Ser-152. The PCI domain occupies 180 to 338 (AASKVMVELL…RKVVVSHSTH (159 aa)). Lys-253 is modified (N6-acetyllysine). At Ser-366 the chain carries Phosphoserine.

Belongs to the eIF-3 subunit M family. In terms of assembly, component of the eukaryotic translation initiation factor 3 (eIF-3) complex, which is composed of 13 subunits: EIF3A, EIF3B, EIF3C, EIF3D, EIF3E, EIF3F, EIF3G, EIF3H, EIF3I, EIF3J, EIF3K, EIF3L and EIF3M. The eIF-3 complex appears to include 3 stable modules: module A is composed of EIF3A, EIF3B, EIF3G and EIF3I; module B is composed of EIF3F, EIF3H, and EIF3M; and module C is composed of EIF3C, EIF3D, EIF3E, EIF3K and EIF3L. EIF3C of module C binds EIF3B of module A and EIF3H of module B, thereby linking the three modules. EIF3J is a labile subunit that binds to the eIF-3 complex via EIF3B. The eIF-3 complex interacts with RPS6KB1 under conditions of nutrient depletion. Mitogenic stimulation leads to binding and activation of a complex composed of MTOR and RPTOR, leading to phosphorylation and release of RPS6KB1 and binding of EIF4B to eIF-3.

The protein localises to the cytoplasm. Component of the eukaryotic translation initiation factor 3 (eIF-3) complex, which is required for several steps in the initiation of protein synthesis. The eIF-3 complex associates with the 40S ribosome and facilitates the recruitment of eIF-1, eIF-1A, eIF-2:GTP:methionyl-tRNAi and eIF-5 to form the 43S pre-initiation complex (43S PIC). The eIF-3 complex stimulates mRNA recruitment to the 43S PIC and scanning of the mRNA for AUG recognition. The eIF-3 complex is also required for disassembly and recycling of post-termination ribosomal complexes and subsequently prevents premature joining of the 40S and 60S ribosomal subunits prior to initiation. The eIF-3 complex specifically targets and initiates translation of a subset of mRNAs involved in cell proliferation, including cell cycling, differentiation and apoptosis, and uses different modes of RNA stem-loop binding to exert either translational activation or repression. The protein is Eukaryotic translation initiation factor 3 subunit M of Bos taurus (Bovine).